A 311-amino-acid chain; its full sequence is DNA-directed RNA polymerase subunit alpha (311 aa).

Residues 1–228 form an alpha N-terminal domain (alpha-NTD) region; that stretch reads MQYQIERIDH…ELFQPLATVT (228 aa). The interval 239–311 is alpha C-terminal domain (alpha-CTD); the sequence is PSPEAQIPLE…ISIPQSRTSV (73 aa).

This sequence belongs to the RNA polymerase alpha chain family. As to quaternary structure, in cyanobacteria the RNAP catalytic core is composed of 2 alpha, 1 beta, 1 beta', 1 gamma and 1 omega subunit. When a sigma factor is associated with the core the holoenzyme is formed, which can initiate transcription.

The catalysed reaction is RNA(n) + a ribonucleoside 5'-triphosphate = RNA(n+1) + diphosphate. DNA-dependent RNA polymerase catalyzes the transcription of DNA into RNA using the four ribonucleoside triphosphates as substrates. This chain is DNA-directed RNA polymerase subunit alpha, found in Prochlorococcus marinus (strain MIT 9312).